The following is a 530-amino-acid chain: Bifunctional purine biosynthesis protein PurH (530 aa).

One can recognise an MGS-like domain in the interval 1-148 (MNNARPIRRA…KNHKDVTIVV (148 aa)).

This sequence belongs to the PurH family.

It carries out the reaction (6R)-10-formyltetrahydrofolate + 5-amino-1-(5-phospho-beta-D-ribosyl)imidazole-4-carboxamide = 5-formamido-1-(5-phospho-D-ribosyl)imidazole-4-carboxamide + (6S)-5,6,7,8-tetrahydrofolate. It catalyses the reaction IMP + H2O = 5-formamido-1-(5-phospho-D-ribosyl)imidazole-4-carboxamide. The protein operates within purine metabolism; IMP biosynthesis via de novo pathway; 5-formamido-1-(5-phospho-D-ribosyl)imidazole-4-carboxamide from 5-amino-1-(5-phospho-D-ribosyl)imidazole-4-carboxamide (10-formyl THF route): step 1/1. Its pathway is purine metabolism; IMP biosynthesis via de novo pathway; IMP from 5-formamido-1-(5-phospho-D-ribosyl)imidazole-4-carboxamide: step 1/1. The protein is Bifunctional purine biosynthesis protein PurH of Vibrio parahaemolyticus serotype O3:K6 (strain RIMD 2210633).